Here is a 200-residue protein sequence, read N- to C-terminus: Recombination protein RecR (200 aa).

Residues 59-74 (CDICGNVCESSPCPVC) form a C4-type zinc finger. A Toprim domain is found at 82 to 177 (SVICVVEEPK…KVTRLASGLP (96 aa)).

Belongs to the RecR family.

Functionally, may play a role in DNA repair. It seems to be involved in an RecBC-independent recombinational process of DNA repair. It may act with RecF and RecO. The chain is Recombination protein RecR from Bifidobacterium longum subsp. infantis (strain ATCC 15697 / DSM 20088 / JCM 1222 / NCTC 11817 / S12).